A 1289-amino-acid polypeptide reads, in one-letter code: uncharacterized protein (1289 aa).

One can recognise an MHD1 domain in the interval 615 to 733 (LDMYDVLKEL…DGMLSYSAQL (119 aa)). Positions 745–774 (DEPSYSLESSDTRSSLSLNNANVNHEKSRS) are disordered. The span at 748-762 (SYSLESSDTRSSLSL) shows a compositional bias: low complexity. The C2 domain maps to 834-966 (AQYHSSHNLE…DDGFPIDFSL (133 aa)). Residues 1044–1184 (YDAILPLFDY…KSVSELKDEV (141 aa)) enclose the MHD2 domain.

It localises to the cytoplasm. This is an uncharacterized protein from Saccharomyces cerevisiae (strain ATCC 204508 / S288c) (Baker's yeast).